Here is a 619-residue protein sequence, read N- to C-terminus: DBH-like monooxygenase protein 2 (619 aa).

A signal peptide spans 1-21; it reads MACVLLFRLFLLLVLAAFSQG. The Extracellular portion of the chain corresponds to 22–594; it reads KRLGPTSPLR…LSGSNTATLR (573 aa). The DOMON domain maps to 40-156; that stretch reads RAVFLRWDFD…DTMRVLAAYG (117 aa). The active site involves tyrosine 209. Disulfide bonds link cysteine 211-cysteine 261 and cysteine 248-cysteine 271. Positions 241 and 242 each coordinate Cu cation. Residue asparagine 250 is glycosylated (N-linked (GlcNAc...) asparagine). Cu cation-binding residues include histidine 309, histidine 390, and histidine 392. 2 cysteine pairs are disulfide-bonded: cysteine 366–cysteine 481 and cysteine 444–cysteine 466. Histidine 390 is an active-site residue. N-linked (GlcNAc...) asparagine glycosylation is present at asparagine 405. Methionine 465 is a Cu cation binding site. Residue asparagine 477 is glycosylated (N-linked (GlcNAc...) asparagine). Residues 595–615 traverse the membrane as a helical segment; it reads PLPMIAVLFLQGSLSCLLAML. At 616–619 the chain is on the cytoplasmic side; it reads QTGV.

Belongs to the copper type II ascorbate-dependent monooxygenase family. The cofactor is Cu(2+). As to expression, expressed at low levels in thymus and testis.

It is found in the membrane. The polypeptide is DBH-like monooxygenase protein 2 (Moxd2) (Mus musculus (Mouse)).